Here is a 420-residue protein sequence, read N- to C-terminus: MIMEKGMNSGEGLPSRSSQASAAKVTVKELETQQPCKEKRGGFVLVHAGAGYHSESKAKEYKHVCKRACQKAIEKLQAGALATDAVAAALVELEDSPFTNAGIGSNLNLLGEIECDASIMDGKSLNFGAVGALSGIKNPVSVAHRLLCEGQKGKLSAGRIPPCFLVGEGAYRWAVDHGIPSCPPSTMTTRFSLAAFKRNKRKLELAERVETDFIQLKRRRQSSAKENDSGTLDTVGAVVVDHEGNVAAAVSSGGLALKHPGRVGQAALYGCGCWAENTGAQNPYSTAVSTSGCGEHLVRTILARECSHALQAEDAHQALLETMQNKFISSPFLACEDGVLGGVIVLRSCRCSSESDSSQDKQTLLVEFLWSHTTESMCVGYMSAQDGKAKTHISRLPPGAVAGQSVAIEGGVCRLESPVN.

Residues M1–V25 are disordered. T234 functions as the Nucleophile in the catalytic mechanism.

This sequence belongs to the Ntn-hydrolase family. In terms of assembly, intramolecular proteolysis generates 2 subunits, alpha and beta, which reassemble through a non-covalent association to form the fully active enzyme.

Functionally, protease responsible for KMT2A/MLL1 and KMT2D/MLL2 processing and activation. Through substrate activation, it controls the expression of HOXA genes, and the expression of key cell cycle regulators including CCNA1, CCNB1, CCNE1 and CDKN2A. This Mus musculus (Mouse) protein is Threonine aspartase 1 (Tasp1).